The sequence spans 632 residues: Phosphomethylpyrimidine synthase (632 aa).

Substrate contacts are provided by residues Asn-237, Met-266, Tyr-295, His-331, 351–353, 392–395, and Glu-431; these read SRG and DGLR. A Zn(2+)-binding site is contributed by His-435. Residue Tyr-458 participates in substrate binding. Zn(2+) is bound at residue His-499. Residues Cys-579, Cys-582, and Cys-587 each contribute to the [4Fe-4S] cluster site.

It belongs to the ThiC family. In terms of assembly, homodimer. [4Fe-4S] cluster serves as cofactor.

The catalysed reaction is 5-amino-1-(5-phospho-beta-D-ribosyl)imidazole + S-adenosyl-L-methionine = 4-amino-2-methyl-5-(phosphooxymethyl)pyrimidine + CO + 5'-deoxyadenosine + formate + L-methionine + 3 H(+). The protein operates within cofactor biosynthesis; thiamine diphosphate biosynthesis. In terms of biological role, catalyzes the synthesis of the hydroxymethylpyrimidine phosphate (HMP-P) moiety of thiamine from aminoimidazole ribotide (AIR) in a radical S-adenosyl-L-methionine (SAM)-dependent reaction. The protein is Phosphomethylpyrimidine synthase of Nitrosomonas eutropha (strain DSM 101675 / C91 / Nm57).